Here is a 513-residue protein sequence, read N- to C-terminus: TRAF3-interacting JNK-activating modulator (513 aa).

Disordered stretches follow at residues 1-96 (MISS…GQVS), 130-171 (SSGI…KAEE), and 381-402 (SLQG…QLKK). Over 1-485 (MISSDSRSSP…QLQVKENELQ (485 aa)) the chain is Cytoplasmic. 2 stretches are compositionally biased toward basic and acidic residues: residues 17-31 (ESYE…ETRE) and 69-79 (RNLEEEKKGQA). Positions 266-488 (MKKVLLEMED…VKENELQCGQ (223 aa)) form a coiled coil. The span at 386-397 (GEQQSSETQDLQ) shows a compositional bias: polar residues. Residues 486-506 (CGQWLPVLMVVIATALAVFLA) traverse the membrane as a helical; Anchor for type IV membrane protein segment. Residues 507–513 (NKGNLVI) are Extracellular-facing.

Interacts (via its coiled-coil domain) with TRAF3 (via isoleucine zipper). Interacts with MAP2K1. Interacts with PPP2CA; this interaction targets PPP2CA to the lysosomes. Interacts with MAVS. Interacts with TBK1. In terms of tissue distribution, expressed in bone marrow, spleen and thymus. Not detected in heart, kidney and liver.

The protein resides in the cell membrane. Its subcellular location is the golgi apparatus membrane. The protein localises to the lysosome membrane. It is found in the mitochondrion outer membrane. Adapter protein that plays essential roles in both innate and adaptive immunity. Plays a crucial role in the regulation of thymocyte development. Mechanistically, mediates TCR-stimulated activation through recruiting MAP2K1/MEK1 to the Golgi and, thereby, facilitating the interaction of MAP2K1/MEK1 with its activator BRAF. Also plays an essential role in regulatory T-cell stability and function by recruiting the serine-threonine phosphatase catalytic subunit (PPP2CA) to the lysosome, thereby facilitating the interaction of PP2Ac with the mTORC1 component RPTOR and restricting glycolytic metabolism. Positively regulates TLR4 signaling activity in macrophage-mediated inflammation by acting as a molecular clamp to facilitate LPS-induced translocation of TLR4 to lipid rafts. In response to viral infection, facilitates the recruitment of TRAF3 to MAVS within mitochondria leading to IRF3 activation and interferon production. However, participates in the maintenance of immune homeostasis and the prevention of overzealous innate immunity by promoting 'Lys-48'-dependent ubiquitination of TBK1. This Mus musculus (Mouse) protein is TRAF3-interacting JNK-activating modulator (Traf3ip3).